Here is a 245-residue protein sequence, read N- to C-terminus: Dehydrogenase/reductase SDR family member 6 (245 aa).

NAD(+) is bound by residues 16 to 18 (QGI), aspartate 37, and aspartate 58. Arginine 144 provides a ligand contact to substrate. Tyrosine 147 serves as the catalytic Proton acceptor. Residues lysine 151 and 180–184 (VDTPS) each bind NAD(+). Residues arginine 188 and arginine 205 each coordinate substrate.

This sequence belongs to the short-chain dehydrogenases/reductases (SDR) family. As to quaternary structure, homotetramer.

Its subcellular location is the cytoplasm. It catalyses the reaction cis-4-hydroxy-L-proline + NAD(+) = 4-oxo-L-proline + NADH + H(+). It carries out the reaction (R)-3-hydroxybutanoate + NAD(+) = acetoacetate + NADH + H(+). The protein operates within amino-acid metabolism. It participates in siderophore biosynthesis. Its function is as follows. NAD(H)-dependent dehydrogenase/reductase with a preference for cyclic substrates. Catalyzes stereoselective conversion of 4-oxo-L-proline to cis-4-hydroxy-L-proline, likely a detoxification mechanism for ketoprolines. Mediates the formation of 2,5-dihydroxybenzoate (2,5-DHBA), a siderophore that chelates free cytoplasmic iron, thereby regulating iron transport and homeostasis while protecting cells against free radical-induced oxidative stress. The iron-siderophore complex is imported into mitochondria, providing an iron source for mitochondrial metabolic processes in particular heme synthesis. May act as a 3-hydroxybutyrate dehydrogenase. In Danio rerio (Zebrafish), this protein is Dehydrogenase/reductase SDR family member 6 (bdh2).